Reading from the N-terminus, the 290-residue chain is Phosphate import ATP-binding protein PstB (290 aa).

Positions 25–285 (LEARNLDFYY…PKTRRARDYL (261 aa)) constitute an ABC transporter domain. 57–64 (GPSGCGKS) serves as a coordination point for ATP.

The protein belongs to the ABC transporter superfamily. Phosphate importer (TC 3.A.1.7) family. The complex is composed of two ATP-binding proteins (PstB), two transmembrane proteins (PstC and PstA) and a solute-binding protein (PstS).

Its subcellular location is the cell inner membrane. The catalysed reaction is phosphate(out) + ATP + H2O = ADP + 2 phosphate(in) + H(+). Its function is as follows. Part of the ABC transporter complex PstSACB involved in phosphate import. Responsible for energy coupling to the transport system. This chain is Phosphate import ATP-binding protein PstB, found in Zymomonas mobilis subsp. mobilis (strain ATCC 31821 / ZM4 / CP4).